The chain runs to 114 residues: uncharacterized protein (114 aa).

A disordered region spans residues 90–114; the sequence is VESSQKRKPEESTIGMDAPKKMKRG.

This is an uncharacterized protein from Caenorhabditis elegans.